We begin with the raw amino-acid sequence, 161 residues long: FAD synthase (161 aa).

Residues 19–20, 24–27, aspartate 106, and tyrosine 133 each bind ATP; these read TF and HPGH.

It belongs to the archaeal FAD synthase family. In terms of assembly, homodimer. A divalent metal cation serves as cofactor.

The enzyme catalyses FMN + ATP + H(+) = FAD + diphosphate. The protein operates within cofactor biosynthesis; FAD biosynthesis; FAD from FMN: step 1/1. Its function is as follows. Catalyzes the transfer of the AMP portion of ATP to flavin mononucleotide (FMN) to produce flavin adenine dinucleotide (FAD) coenzyme. The polypeptide is FAD synthase (Methanothermobacter marburgensis (strain ATCC BAA-927 / DSM 2133 / JCM 14651 / NBRC 100331 / OCM 82 / Marburg) (Methanobacterium thermoautotrophicum)).